The sequence spans 103 residues: Large ribosomal subunit protein bL21 (103 aa).

This sequence belongs to the bacterial ribosomal protein bL21 family. As to quaternary structure, part of the 50S ribosomal subunit. Contacts protein L20.

In terms of biological role, this protein binds to 23S rRNA in the presence of protein L20. This is Large ribosomal subunit protein bL21 from Desulforudis audaxviator (strain MP104C).